The following is a 192-amino-acid chain: Aminodeoxychorismate synthase component 2 (192 aa).

The Glutamine amidotransferase type-1 domain occupies 3–192 (SVLMIDNCDS…LANLIHRPCH (190 aa)). Catalysis depends on residues Cys83, His170, and Glu172.

As to quaternary structure, monomer. Heterodimer consisting of two non-identical subunits: a glutamine amidotransferase subunit (PabA) and a aminodeoxychorismate synthase subunit (PabB).

It catalyses the reaction chorismate + L-glutamine = 4-amino-4-deoxychorismate + L-glutamate. The protein operates within cofactor biosynthesis; tetrahydrofolate biosynthesis; 4-aminobenzoate from chorismate: step 1/2. Its function is as follows. Part of a heterodimeric complex that catalyzes the two-step biosynthesis of 4-amino-4-deoxychorismate (ADC), a precursor of p-aminobenzoate (PABA) and tetrahydrofolate. In the first step, a glutamine amidotransferase (PabA) generates ammonia as a substrate that, along with chorismate, is used in the second step, catalyzed by aminodeoxychorismate synthase (PabB) to produce ADC. PabA converts glutamine into glutamate only in the presence of stoichiometric amounts of PabB. The protein is Aminodeoxychorismate synthase component 2 of Streptomyces lividans.